We begin with the raw amino-acid sequence, 438 residues long: Serine hydroxymethyltransferase (438 aa).

(6S)-5,6,7,8-tetrahydrofolate contacts are provided by residues L133 and 137–139 (GHL). At K242 the chain carries N6-(pyridoxal phosphate)lysine.

Belongs to the SHMT family. Homodimer. Requires pyridoxal 5'-phosphate as cofactor.

It localises to the cytoplasm. It catalyses the reaction (6R)-5,10-methylene-5,6,7,8-tetrahydrofolate + glycine + H2O = (6S)-5,6,7,8-tetrahydrofolate + L-serine. The protein operates within one-carbon metabolism; tetrahydrofolate interconversion. It participates in amino-acid biosynthesis; glycine biosynthesis; glycine from L-serine: step 1/1. Catalyzes the reversible interconversion of serine and glycine with tetrahydrofolate (THF) serving as the one-carbon carrier. This reaction serves as the major source of one-carbon groups required for the biosynthesis of purines, thymidylate, methionine, and other important biomolecules. Also exhibits THF-independent aldolase activity toward beta-hydroxyamino acids, producing glycine and aldehydes, via a retro-aldol mechanism. The sequence is that of Serine hydroxymethyltransferase from Brucella melitensis biotype 2 (strain ATCC 23457).